The sequence spans 506 residues: MSFSVEVLAGIAIELQRGIGHQDRFQRLITTLRQVLACDASALLRYESRQFIPLAIDGLAQDVLGRRFTLEGHPRLEAIARAGDVVRFPADSDLPDPYDGLIPGQESLKVHACVGLPLFAGQNLIGALTLDAMTPEQFEVFSDEELRLVAALAAGALSNALLIEQLESQNILPGSSGVFEPIKETHMIGLSPAMTQLKKEIEIVAGSDLNVLIGGETGTGKELVAKAIHQGSPRAVNPLVYLNCAALPESVAESELFGHVKGAFTGAISNRSGKFEMADNGTLFLDEIGELSLALQAKLLRVLQYGDIQRVGDDRSLRVDVRVLAATNRDLREEVLAGRFRADLFHRLSVFPLFVPPLRERGDDVVLLAGYFCEQCRLRLGLSRVVLSTGARRHLLNYGWPGNVRELEHAIHRAVVLARATRAGDEVILEAQHFALSEDVLPAPPAESFLALPTCRNLRESTENFQREMIRQALAQNNHNWAASARALETDVANLHRLAKRLGLKD.

Asp-57 is modified (4-aspartylphosphate). Positions 187 to 416 (MIGLSPAMTQ…LEHAIHRAVV (230 aa)) constitute a Sigma-54 factor interaction domain. Residues 215–222 (GETGTGKE) and 278–287 (ADNGTLFLDE) each bind ATP. A DNA-binding region (H-T-H motif) is located at residues 481–500 (WAASARALETDVANLHRLAK).

Its pathway is nitrogen metabolism; nitric oxide reduction. In terms of biological role, required for the expression of anaerobic nitric oxide (NO) reductase, acts as a transcriptional activator for at least the norVW operon. Activation also requires sigma-54. This Salmonella newport (strain SL254) protein is Anaerobic nitric oxide reductase transcription regulator NorR.